The chain runs to 141 residues: Organic hydroperoxide resistance protein-like 1 (141 aa).

A disordered region spans residues 1-20 (MAVNYETKATNTGGRNGHVQ).

It belongs to the OsmC/Ohr family.

This is Organic hydroperoxide resistance protein-like 1 from Staphylococcus saprophyticus subsp. saprophyticus (strain ATCC 15305 / DSM 20229 / NCIMB 8711 / NCTC 7292 / S-41).